The sequence spans 546 residues: UDP-glycosyltransferase FPY2 (546 aa).

An N-terminal signal peptide occupies residues 1–20 (MSLPKAQILVVVTVGGSTNS). Residues 517–537 (LNNIDVALLFFILLGIISWIT) form a helical membrane-spanning segment.

This sequence belongs to the glycosyltransferase 28 family.

It localises to the membrane. The protein operates within secondary metabolite biosynthesis. Functionally, UDP-glycosyltransferase; part of the gene cluster that mediates the biosynthesis of the gamma-pyrones fusapyrone (FPY) and deoxyfusapyrone (dFPY). FPY is an undecaketide and thus likely synthesized by the polyketide synthase FPY1 from acetyl-CoA functioning as starter unit and the addition of 10 malonyl-CoA extender units by successive Claisen-condensations. Next to this, FPY shares some rare features: C-glycosylated 4-deoxyglucose at C-3, a gem-dimethyl group at C-13, and an alpha-beta to beta-gamma double bond shift at C-20. During FPY biosynthesis mono-C-methyl groups are transferred to the tetra-, penta-, hexa- and heptaketide, while two C-methyl groups are transferred to the nonaketide, suggesting that the CMet domain is programmed to selectively catalyze two successive C-alpha-methylation reactions of the nonaketide, while other alpha-carbons are non- or mono-methylated only. While the origin of the 4'-deoxyglucose moiety remains opaque, its transfer to C-3 is most likely mediated by the C-glycosyltransferase FPY2. Next to this, the hydroxyl group present at C-33 and discriminating between FPY and dFPY, is likely to be installed by the cytochrome P450 monooxygenase FPY7. No putative function can be predicted for the remaining genes FPY3-FPY6. The polypeptide is UDP-glycosyltransferase FPY2 (Fusarium mangiferae (Mango malformation disease fungus)).